Reading from the N-terminus, the 788-residue chain is Ribonucleoside-diphosphate reductase subunit alpha (788 aa).

The ATP-cone domain occupies 2–92; it reads ITVVKRNGRI…LYDLYHKVSG (91 aa). ATP is bound by residues Lys-6, 12 to 18, and Thr-52; that span reads EPLDITK. Thr-200 lines the GDP pocket. An intrachain disulfide couples Cys-216 to Cys-497. DTTP-binding positions include 223 to 225 and Arg-253; that span reads DNI. Asn-424 is a GDP binding site. The Proton acceptor role is filled by Asn-424. Cys-426 serves as the catalytic Cysteine radical intermediate. Residues Glu-428 and 661-663 each bind GDP; that span reads SSI. Glu-428 (proton acceptor) is an active-site residue.

It belongs to the ribonucleoside diphosphate reductase large chain family. As to quaternary structure, tetramer of two alpha and two beta subunits.

The catalysed reaction is a 2'-deoxyribonucleoside 5'-diphosphate + [thioredoxin]-disulfide + H2O = a ribonucleoside 5'-diphosphate + [thioredoxin]-dithiol. Under complex allosteric control mediated by deoxynucleoside triphosphates and ATP binding to separate specificity and activation sites on the alpha subunit. The type of nucleotide bound at the specificity site determines substrate preference. It seems probable that ATP makes the enzyme reduce CDP and UDP, dGTP favors ADP reduction and dTTP favors GDP reduction. Stimulated by ATP and inhibited by dATP binding to the activity site. Provides the precursors necessary for DNA synthesis. Catalyzes the biosynthesis of deoxyribonucleotides from the corresponding ribonucleotides. This Helicobacter pylori (strain ATCC 700392 / 26695) (Campylobacter pylori) protein is Ribonucleoside-diphosphate reductase subunit alpha (nrdA).